We begin with the raw amino-acid sequence, 520 residues long: MGRFSSLCALTAVIHSFGRVSAAIGPVTDLTISNGDVSPDGFTRAAVLANGVFPGPLITGNKGDNFQINVIDNLSNETMLKSTSIHWHGFFQKGTNWADGAAFVNQCPIATGNSFLYDFTATDQAGTFWYHSHLSTQYCDGLRGPMVVYDPSDPHADLYDVDDETTIITLSDWYHTAASLGAAFPIGSDSTLINGLGRFAGGDSTDLAVITVEQGKRYRMRLLSLSCDPNYVFSIDGHNMTIIEADAVNHEPLTVDSIQIYAGQRYSFVLTADQDIDNYFIRALPSAGTTSFDGGINSAILRYSGASEVDPTTTETTSVLPLDEANLVPLDSPAAPGDPNIGGVDYALNLDFNFDGTNFFINDVSFVSPTVPVLLQILSGTTSAADLLPSGSLFAVPSNSTIEISFPITATNAPGAPHPFHLHGHTFSIVRTAGSTDTNFVNPVRRDVVNTGTVGDNVTIRFTTDNPGPWFLHCHIDFHLEAGFAIVFSEDTADVSNTTTPSTAWEDLCPTYNALDSSDL.

The first 18 residues, 1 to 18, serve as a signal peptide directing secretion; it reads MGRFSSLCALTAVIHSFG. Plastocyanin-like domains lie at 24 to 149, 161 to 303, and 370 to 491; these read IGPV…MVVY, VDDE…ILRY, and TVPV…FSED. Asn-73 and Asn-76 each carry an N-linked (GlcNAc...) asparagine glycan. Cu cation contacts are provided by His-86, His-88, His-131, and His-133. Cystine bridges form between Cys-107–Cys-509 and Cys-139–Cys-227. Residues Asn-239 and Asn-399 are each glycosylated (N-linked (GlcNAc...) asparagine). His-418, His-421, His-423, His-473, Cys-474, His-475, and His-479 together coordinate Cu cation. The N-linked (GlcNAc...) asparagine glycan is linked to Asn-497.

It belongs to the multicopper oxidase family. As to quaternary structure, homodimer. It depends on Cu cation as a cofactor.

It localises to the secreted. The enzyme catalyses 4 hydroquinone + O2 = 4 benzosemiquinone + 2 H2O. Functionally, lignin degradation and detoxification of lignin-derived products. The polypeptide is Laccase-4 (LCC4) (Trametes villosa (White-rot fungus)).